We begin with the raw amino-acid sequence, 189 residues long: uncharacterized protein (189 aa).

The protein belongs to the flavoredoxin family. Requires FMN as cofactor.

This is an uncharacterized protein from Escherichia coli (strain K12).